Here is a 359-residue protein sequence, read N- to C-terminus: Peptide chain release factor 1 (359 aa).

At glutamine 236 the chain carries N5-methylglutamine.

It belongs to the prokaryotic/mitochondrial release factor family. Post-translationally, methylated by PrmC. Methylation increases the termination efficiency of RF1.

The protein localises to the cytoplasm. Its function is as follows. Peptide chain release factor 1 directs the termination of translation in response to the peptide chain termination codons UAG and UAA. The polypeptide is Peptide chain release factor 1 (Streptococcus pyogenes serotype M12 (strain MGAS2096)).